The primary structure comprises 59 residues: Large ribosomal subunit protein bL32 (59 aa).

Over residues 1–16 (MAVPKRKTSPSKRGMR) the composition is skewed to basic residues. The interval 1 to 59 (MAVPKRKTSPSKRGMRRSADALKAPTYIEDKNSGELRRPHHIDLKTGMYRGRSVLPPKD) is disordered. Residues 28 to 44 (IEDKNSGELRRPHHIDL) show a composition bias toward basic and acidic residues.

This sequence belongs to the bacterial ribosomal protein bL32 family.

The polypeptide is Large ribosomal subunit protein bL32 (Bartonella quintana (strain Toulouse) (Rochalimaea quintana)).